Consider the following 338-residue polypeptide: Ferredoxin--NADP reductase (338 aa).

Positions 32, 40, 45, 85, 120, 287, and 327 each coordinate FAD.

Belongs to the ferredoxin--NADP reductase type 2 family. As to quaternary structure, homodimer. It depends on FAD as a cofactor.

The catalysed reaction is 2 reduced [2Fe-2S]-[ferredoxin] + NADP(+) + H(+) = 2 oxidized [2Fe-2S]-[ferredoxin] + NADPH. The polypeptide is Ferredoxin--NADP reductase (Wolbachia pipientis wMel).